We begin with the raw amino-acid sequence, 185 residues long: Elongation factor P (185 aa).

Belongs to the elongation factor P family.

The protein localises to the cytoplasm. Its pathway is protein biosynthesis; polypeptide chain elongation. In terms of biological role, involved in peptide bond synthesis. Stimulates efficient translation and peptide-bond synthesis on native or reconstituted 70S ribosomes in vitro. Probably functions indirectly by altering the affinity of the ribosome for aminoacyl-tRNA, thus increasing their reactivity as acceptors for peptidyl transferase. This is Elongation factor P from Trichodesmium erythraeum (strain IMS101).